Consider the following 812-residue polypeptide: DNA gyrase subunit A (812 aa).

Residues 31 to 496 (IPDVRDGLKP…GNTDFNVEDV (466 aa)) form the Topo IIA-type catalytic domain. Catalysis depends on Y119, which acts as the O-(5'-phospho-DNA)-tyrosine intermediate. The GyrA-box motif lies at 523–529 (QGRGGKG).

This sequence belongs to the type II topoisomerase GyrA/ParC subunit family. As to quaternary structure, heterotetramer, composed of two GyrA and two GyrB chains. In the heterotetramer, GyrA contains the active site tyrosine that forms a transient covalent intermediate with DNA, while GyrB binds cofactors and catalyzes ATP hydrolysis.

It is found in the cytoplasm. The enzyme catalyses ATP-dependent breakage, passage and rejoining of double-stranded DNA.. In terms of biological role, a type II topoisomerase that negatively supercoils closed circular double-stranded (ds) DNA in an ATP-dependent manner to modulate DNA topology and maintain chromosomes in an underwound state. Negative supercoiling favors strand separation, and DNA replication, transcription, recombination and repair, all of which involve strand separation. Also able to catalyze the interconversion of other topological isomers of dsDNA rings, including catenanes and knotted rings. Type II topoisomerases break and join 2 DNA strands simultaneously in an ATP-dependent manner. This chain is DNA gyrase subunit A, found in Kosmotoga olearia (strain ATCC BAA-1733 / DSM 21960 / TBF 19.5.1).